The primary structure comprises 385 residues: Na(+)/H(+) antiporter NhaA (385 aa).

The next 11 helical transmembrane spans lie at Tyr-9–Asp-29, Ile-45–Phe-65, Ile-87–Val-107, Gly-114–Gly-134, Ala-155–Val-175, Thr-198–Gln-218, Gly-220–Asn-235, Ala-245–Val-265, Ile-282–Leu-302, Phe-312–Met-332, and Gln-345–Met-365.

The protein belongs to the NhaA Na(+)/H(+) (TC 2.A.33) antiporter family.

The protein resides in the cell membrane. The catalysed reaction is Na(+)(in) + 2 H(+)(out) = Na(+)(out) + 2 H(+)(in). Its function is as follows. Na(+)/H(+) antiporter that extrudes sodium in exchange for external protons. In Tropheryma whipplei (strain TW08/27) (Whipple's bacillus), this protein is Na(+)/H(+) antiporter NhaA.